We begin with the raw amino-acid sequence, 101 residues long: Small ribosomal subunit protein bS6 (101 aa).

It belongs to the bacterial ribosomal protein bS6 family.

Functionally, binds together with bS18 to 16S ribosomal RNA. The polypeptide is Small ribosomal subunit protein bS6 (Micrococcus luteus (strain ATCC 4698 / DSM 20030 / JCM 1464 / CCM 169 / CCUG 5858 / IAM 1056 / NBRC 3333 / NCIMB 9278 / NCTC 2665 / VKM Ac-2230) (Micrococcus lysodeikticus)).